We begin with the raw amino-acid sequence, 566 residues long: Nitrate/nitrite sensor protein NarQ (566 aa).

Over 1-13 the chain is Cytoplasmic; it reads MIVKRPVSASLAR. Residues 14–34 traverse the membrane as a helical segment; that stretch reads AFFYIVLLSILSTGIALLTLA. At 35–146 the chain is on the periplasmic side; sequence SSLRDAEAIN…LALQHYAERK (112 aa). A helical transmembrane segment spans residues 147 to 167; sequence MLLVVAISLAGGIGIFTLVFF. The Cytoplasmic segment spans residues 168-566; the sequence is TLRRIRHQVV…SAEGEESQLM (399 aa). The 54-residue stretch at 174–227 folds into the HAMP domain; the sequence is HQVVAPLNQLVTASQRIEHGQFDSPPLDTNLPNELGLLAKTFNQMSSELHKLYR. The Histidine kinase domain maps to 364-559; sequence TIARELHDSL…LVSISFRSAE (196 aa). Residue His-370 is modified to Phosphohistidine; by autocatalysis.

It localises to the cell inner membrane. It carries out the reaction ATP + protein L-histidine = ADP + protein N-phospho-L-histidine.. Functionally, acts as a sensor for nitrate/nitrite and transduces signal of nitrate/nitrite availability to the NarL/NarP proteins. NarQ probably activates NarL and NarP by phosphorylation. NarQ probably negatively regulates the NarL protein by dephosphorylation. The sequence is that of Nitrate/nitrite sensor protein NarQ (narQ) from Escherichia coli (strain K12).